Reading from the N-terminus, the 556-residue chain is 2-isopropylmalate synthase (556 aa).

The region spanning proline 33–aspartate 307 is the Pyruvate carboxyltransferase domain. Mg(2+) is bound by residues aspartate 42, histidine 246, histidine 248, and asparagine 282. The tract at residues alanine 439 to alanine 556 is regulatory domain.

This sequence belongs to the alpha-IPM synthase/homocitrate synthase family. LeuA type 2 subfamily. Homodimer. It depends on Mg(2+) as a cofactor.

Its subcellular location is the cytoplasm. It carries out the reaction 3-methyl-2-oxobutanoate + acetyl-CoA + H2O = (2S)-2-isopropylmalate + CoA + H(+). Its pathway is amino-acid biosynthesis; L-leucine biosynthesis; L-leucine from 3-methyl-2-oxobutanoate: step 1/4. Catalyzes the condensation of the acetyl group of acetyl-CoA with 3-methyl-2-oxobutanoate (2-ketoisovalerate) to form 3-carboxy-3-hydroxy-4-methylpentanoate (2-isopropylmalate). This Ectopseudomonas mendocina (strain ymp) (Pseudomonas mendocina) protein is 2-isopropylmalate synthase.